A 292-amino-acid polypeptide reads, in one-letter code: Ribosomal protein L11 methyltransferase (292 aa).

Residues Thr-144, Gly-165, Asp-187, and Asn-229 each coordinate S-adenosyl-L-methionine.

This sequence belongs to the methyltransferase superfamily. PrmA family.

Its subcellular location is the cytoplasm. The enzyme catalyses L-lysyl-[protein] + 3 S-adenosyl-L-methionine = N(6),N(6),N(6)-trimethyl-L-lysyl-[protein] + 3 S-adenosyl-L-homocysteine + 3 H(+). Functionally, methylates ribosomal protein L11. In Pseudomonas syringae pv. tomato (strain ATCC BAA-871 / DC3000), this protein is Ribosomal protein L11 methyltransferase.